Consider the following 228-residue polypeptide: L-ribulose-5-phosphate 4-epimerase UlaF (228 aa).

Substrate contacts are provided by residues 26-27, 43-44, and 72-73; these read GN, SG, and SS. D74, H93, and H95 together coordinate Zn(2+). D118 (proton donor/acceptor) is an active-site residue. H167 provides a ligand contact to Zn(2+). The active-site Proton donor/acceptor is the Y225.

This sequence belongs to the aldolase class II family. AraD/FucA subfamily. It depends on Zn(2+) as a cofactor.

It catalyses the reaction L-ribulose 5-phosphate = D-xylulose 5-phosphate. It functions in the pathway cofactor degradation; L-ascorbate degradation; D-xylulose 5-phosphate from L-ascorbate: step 4/4. In terms of biological role, catalyzes the isomerization of L-ribulose 5-phosphate to D-xylulose 5-phosphate. Is involved in the anaerobic L-ascorbate utilization. This chain is L-ribulose-5-phosphate 4-epimerase UlaF, found in Escherichia coli O139:H28 (strain E24377A / ETEC).